Consider the following 814-residue polypeptide: Echinoderm microtubule-associated protein-like 1 (814 aa).

Positions 31–72 (SMEISDRIASLEQRVQMQEDDIQLLKSALADVVRRLNITEEQ) form a coiled coil. The segment at 77 to 185 (NRKGPTKARP…EPTFSPEEGY (109 aa)) is disordered. Polar residues predominate over residues 92–101 (PLRTTVNNGT). Over residues 103–115 (LPKKPSASLPSPS) the composition is skewed to low complexity. Serine 113 is subject to Phosphoserine. Over residues 127–137 (KSINRTSSSER) the composition is skewed to polar residues. Positions 142 to 152 (GRRESSGDSKG) are enriched in basic and acidic residues. The span at 155-167 (NRTGSTSSSSSGK) shows a compositional bias: low complexity. Residues 175–814 (KEPTFSPEEG…DTSIMQWRVI (640 aa)) form a tandem atypical propeller in EMLs region. WD repeat units follow at residues 260–309 (EQLQ…IWDS), 314–357 (TLHV…VWDW), 362–399 (RLAD…FWTL), 408–445 (QGLF…VWGK), 449–488 (RISY…SWNG), 492–529 (KLHK…LQGT), 534–571 (FTPI…LWDA), 577–612 (VWDK…VFDT), 616–654 (DLVT…IYGV), 663–700 (RVGK…YWVP), 708–767 (SVET…LFSY), and 774–813 (APSH…QWRV).

Belongs to the WD repeat EMAP family. As to quaternary structure, homotrimer; self-association is mediated by the N-terminal coiled coil. Does not interact with EML3. Binds repolymerizing microtubules. Binds unpolymerized tubulins via its WD repeat region. Interacts with TASOR.

The protein localises to the cytoplasm. It is found in the perinuclear region. Its subcellular location is the cytoskeleton. Its function is as follows. Modulates the assembly and organization of the microtubule cytoskeleton, and probably plays a role in regulating the orientation of the mitotic spindle and the orientation of the plane of cell division. Required for normal proliferation of neuronal progenitor cells in the developing brain and for normal brain development. Does not affect neuron migration per se. This Rattus norvegicus (Rat) protein is Echinoderm microtubule-associated protein-like 1 (Eml1).